Consider the following 732-residue polypeptide: Polyribonucleotide nucleotidyltransferase (732 aa).

2 residues coordinate Mg(2+): Asp-503 and Asp-509. The KH domain occupies 570 to 629 (PRLTSIQIPVDAIGLIIGKGGETIRSITEETGAEINIEDDGTVTIACSSPEGTNAAVETI). The 75-residue stretch at 639–713 (GNTYLGKVRD…GKNRFALSIK (75 aa)) folds into the S1 motif domain. The tract at residues 710-732 (LSIKAVESEPEKSDENKAGTEGN) is disordered. The segment covering 715–732 (VESEPEKSDENKAGTEGN) has biased composition (basic and acidic residues).

The protein belongs to the polyribonucleotide nucleotidyltransferase family. Mg(2+) is required as a cofactor.

The protein localises to the cytoplasm. The catalysed reaction is RNA(n+1) + phosphate = RNA(n) + a ribonucleoside 5'-diphosphate. In terms of biological role, involved in mRNA degradation. Catalyzes the phosphorolysis of single-stranded polyribonucleotides processively in the 3'- to 5'-direction. This is Polyribonucleotide nucleotidyltransferase from Chlorobium phaeobacteroides (strain DSM 266 / SMG 266 / 2430).